The sequence spans 174 residues: Beta-lactoglobulin (174 aa).

The N-terminal stretch at 1–18 (MKFLLLTVGLTSICAIQA) is a signal peptide. 2 disulfides stabilise this stretch: Cys-79-Cys-172 and Cys-122-Cys-134.

Belongs to the calycin superfamily. Lipocalin family. Monomer.

It is found in the secreted. Its function is as follows. Lactoglobulin is the primary component of whey, it binds retinol and is probably involved in the transport of that molecule. The chain is Beta-lactoglobulin (LGB) from Trichosurus vulpecula (Brush-tailed possum).